The sequence spans 600 residues: NADH-quinone oxidoreductase subunit C/D (600 aa).

The segment at M1 to E190 is NADH dehydrogenase I subunit C. The NADH dehydrogenase I subunit D stretch occupies residues E214–R600.

The protein in the N-terminal section; belongs to the complex I 30 kDa subunit family. This sequence in the C-terminal section; belongs to the complex I 49 kDa subunit family. As to quaternary structure, NDH-1 is composed of 13 different subunits. Subunits NuoB, CD, E, F, and G constitute the peripheral sector of the complex.

It localises to the cell membrane. The enzyme catalyses a quinone + NADH + 5 H(+)(in) = a quinol + NAD(+) + 4 H(+)(out). Functionally, NDH-1 shuttles electrons from NADH, via FMN and iron-sulfur (Fe-S) centers, to quinones in the respiratory chain. The immediate electron acceptor for the enzyme in this species is believed to be ubiquinone. Couples the redox reaction to proton translocation (for every two electrons transferred, four hydrogen ions are translocated across the cytoplasmic membrane), and thus conserves the redox energy in a proton gradient. In Buchnera aphidicola subsp. Acyrthosiphon pisum (strain Tuc7), this protein is NADH-quinone oxidoreductase subunit C/D.